The chain runs to 223 residues: Deoxyribose-phosphate aldolase (223 aa).

The active-site Proton donor/acceptor is Asp-91. Lys-153 (schiff-base intermediate with acetaldehyde) is an active-site residue. Lys-182 serves as the catalytic Proton donor/acceptor.

This sequence belongs to the DeoC/FbaB aldolase family. DeoC type 1 subfamily.

The protein resides in the cytoplasm. The enzyme catalyses 2-deoxy-D-ribose 5-phosphate = D-glyceraldehyde 3-phosphate + acetaldehyde. The protein operates within carbohydrate degradation; 2-deoxy-D-ribose 1-phosphate degradation; D-glyceraldehyde 3-phosphate and acetaldehyde from 2-deoxy-alpha-D-ribose 1-phosphate: step 2/2. Its function is as follows. Catalyzes a reversible aldol reaction between acetaldehyde and D-glyceraldehyde 3-phosphate to generate 2-deoxy-D-ribose 5-phosphate. In Streptococcus pyogenes serotype M3 (strain ATCC BAA-595 / MGAS315), this protein is Deoxyribose-phosphate aldolase.